A 256-amino-acid polypeptide reads, in one-letter code: 5-keto-4-deoxy-D-glucarate aldolase (256 aa).

H50 functions as the Proton acceptor in the catalytic mechanism. Substrate is bound at residue Q151. A Mg(2+)-binding site is contributed by E153. 2 residues coordinate substrate: S178 and D179. D179 lines the Mg(2+) pocket.

Belongs to the HpcH/HpaI aldolase family. KDGluc aldolase subfamily. In terms of assembly, homohexamer; trimer of dimers. Mg(2+) serves as cofactor.

The catalysed reaction is 5-dehydro-4-deoxy-D-glucarate = 2-hydroxy-3-oxopropanoate + pyruvate. The enzyme catalyses 2-dehydro-3-deoxy-D-glucarate = 2-hydroxy-3-oxopropanoate + pyruvate. The protein operates within carbohydrate acid metabolism; galactarate degradation; D-glycerate from galactarate: step 2/3. In terms of biological role, catalyzes the reversible retro-aldol cleavage of both 5-keto-4-deoxy-D-glucarate and 2-keto-3-deoxy-D-glucarate to pyruvate and tartronic semialdehyde. The protein is 5-keto-4-deoxy-D-glucarate aldolase of Salmonella arizonae (strain ATCC BAA-731 / CDC346-86 / RSK2980).